The primary structure comprises 314 residues: 4-hydroxy-3-methylbut-2-enyl diphosphate reductase (314 aa).

Cys12 contacts [4Fe-4S] cluster. Residues His41 and His74 each coordinate (2E)-4-hydroxy-3-methylbut-2-enyl diphosphate. Residues His41 and His74 each contribute to the dimethylallyl diphosphate site. Residues His41 and His74 each coordinate isopentenyl diphosphate. Cys96 is a binding site for [4Fe-4S] cluster. His124 contacts (2E)-4-hydroxy-3-methylbut-2-enyl diphosphate. Residue His124 coordinates dimethylallyl diphosphate. His124 is an isopentenyl diphosphate binding site. The active-site Proton donor is Glu126. Thr167 is a binding site for (2E)-4-hydroxy-3-methylbut-2-enyl diphosphate. Position 197 (Cys197) interacts with [4Fe-4S] cluster. (2E)-4-hydroxy-3-methylbut-2-enyl diphosphate is bound by residues Ser225, Ser226, Asn227, and Ser269. The dimethylallyl diphosphate site is built by Ser225, Ser226, Asn227, and Ser269. Residues Ser225, Ser226, Asn227, and Ser269 each contribute to the isopentenyl diphosphate site.

The protein belongs to the IspH family. [4Fe-4S] cluster serves as cofactor.

It catalyses the reaction isopentenyl diphosphate + 2 oxidized [2Fe-2S]-[ferredoxin] + H2O = (2E)-4-hydroxy-3-methylbut-2-enyl diphosphate + 2 reduced [2Fe-2S]-[ferredoxin] + 2 H(+). It carries out the reaction dimethylallyl diphosphate + 2 oxidized [2Fe-2S]-[ferredoxin] + H2O = (2E)-4-hydroxy-3-methylbut-2-enyl diphosphate + 2 reduced [2Fe-2S]-[ferredoxin] + 2 H(+). The protein operates within isoprenoid biosynthesis; dimethylallyl diphosphate biosynthesis; dimethylallyl diphosphate from (2E)-4-hydroxy-3-methylbutenyl diphosphate: step 1/1. It participates in isoprenoid biosynthesis; isopentenyl diphosphate biosynthesis via DXP pathway; isopentenyl diphosphate from 1-deoxy-D-xylulose 5-phosphate: step 6/6. In terms of biological role, catalyzes the conversion of 1-hydroxy-2-methyl-2-(E)-butenyl 4-diphosphate (HMBPP) into a mixture of isopentenyl diphosphate (IPP) and dimethylallyl diphosphate (DMAPP). Acts in the terminal step of the DOXP/MEP pathway for isoprenoid precursor biosynthesis. This Haemophilus ducreyi (strain 35000HP / ATCC 700724) protein is 4-hydroxy-3-methylbut-2-enyl diphosphate reductase.